Consider the following 188-residue polypeptide: Elongation factor P (188 aa).

The protein belongs to the elongation factor P family.

Its subcellular location is the cytoplasm. It participates in protein biosynthesis; polypeptide chain elongation. Its function is as follows. Involved in peptide bond synthesis. Stimulates efficient translation and peptide-bond synthesis on native or reconstituted 70S ribosomes in vitro. Probably functions indirectly by altering the affinity of the ribosome for aminoacyl-tRNA, thus increasing their reactivity as acceptors for peptidyl transferase. The chain is Elongation factor P from Nitrobacter winogradskyi (strain ATCC 25391 / DSM 10237 / CIP 104748 / NCIMB 11846 / Nb-255).